We begin with the raw amino-acid sequence, 108 residues long: Translation initiation factor 1A (108 aa).

The 75-residue stretch at 10–84 (IRVITPNKKS…EKGDIIYRYT (75 aa)) folds into the S1-like domain.

This sequence belongs to the eIF-1A family.

In terms of biological role, seems to be required for maximal rate of protein biosynthesis. Enhances ribosome dissociation into subunits and stabilizes the binding of the initiator Met-tRNA(I) to 40 S ribosomal subunits. This is Translation initiation factor 1A from Picrophilus torridus (strain ATCC 700027 / DSM 9790 / JCM 10055 / NBRC 100828 / KAW 2/3).